Consider the following 881-residue polypeptide: Valine--tRNA ligase (881 aa).

The 'HIGH' region motif lies at 42 to 52; it reads PNITGDLHVGH. Positions 554 to 558 match the 'KMSKS' region motif; sequence KMSKS. ATP is bound at residue K557.

Belongs to the class-I aminoacyl-tRNA synthetase family. ValS type 1 subfamily. Monomer.

Its subcellular location is the cytoplasm. The catalysed reaction is tRNA(Val) + L-valine + ATP = L-valyl-tRNA(Val) + AMP + diphosphate. In terms of biological role, catalyzes the attachment of valine to tRNA(Val). As ValRS can inadvertently accommodate and process structurally similar amino acids such as threonine, to avoid such errors, it has a 'posttransfer' editing activity that hydrolyzes mischarged Thr-tRNA(Val) in a tRNA-dependent manner. The sequence is that of Valine--tRNA ligase from Wigglesworthia glossinidia brevipalpis.